Consider the following 348-residue polypeptide: tRNA pseudouridine synthase D (348 aa).

Position 27 (Phe-27) interacts with substrate. Asp-80 acts as the Nucleophile in catalysis. Asn-129 is a binding site for substrate. In terms of domain architecture, TRUD spans 155 to 303; that stretch reads GVPNYFGSQR…VESARRAVLL (149 aa). Phe-329 contributes to the substrate binding site.

Belongs to the pseudouridine synthase TruD family.

The enzyme catalyses uridine(13) in tRNA = pseudouridine(13) in tRNA. Its function is as follows. Responsible for synthesis of pseudouridine from uracil-13 in transfer RNAs. The sequence is that of tRNA pseudouridine synthase D from Pectobacterium carotovorum subsp. carotovorum (strain PC1).